Reading from the N-terminus, the 201-residue chain is MNETNDNDIDQLIYLFSKLPGLGSRSARRIALYLLQDKDVRLKSLINNLVEIDKKIVKCKICGNIDTENICRICSSEYRDKSIIAIVETVAELWAMERSGNFKGLYHVLGHNLSAASRQNPSILRLPELLKRCFAENIKEVIIATNSTLEGQTTAYFITEYLKEHPAKISRLASGIPIGGELDYLDEGTVSAAINLRQPFE.

The C4-type zinc finger occupies 59–74 (CKICGNIDTENICRIC). One can recognise a Toprim domain in the interval 82 to 177 (SIIAIVETVA…KISRLASGIP (96 aa)).

Belongs to the RecR family.

In terms of biological role, may play a role in DNA repair. It seems to be involved in an RecBC-independent recombinational process of DNA repair. It may act with RecF and RecO. The chain is Recombination protein RecR from Rickettsia massiliae (strain Mtu5).